The primary structure comprises 458 residues: Methylenetetrahydrofolate--tRNA-(uracil-5-)-methyltransferase TrmFO (458 aa).

Residue 12–17 coordinates FAD; the sequence is GAGLAG.

This sequence belongs to the MnmG family. TrmFO subfamily. FAD is required as a cofactor.

It is found in the cytoplasm. It carries out the reaction uridine(54) in tRNA + (6R)-5,10-methylene-5,6,7,8-tetrahydrofolate + NADH + H(+) = 5-methyluridine(54) in tRNA + (6S)-5,6,7,8-tetrahydrofolate + NAD(+). The enzyme catalyses uridine(54) in tRNA + (6R)-5,10-methylene-5,6,7,8-tetrahydrofolate + NADPH + H(+) = 5-methyluridine(54) in tRNA + (6S)-5,6,7,8-tetrahydrofolate + NADP(+). Catalyzes the folate-dependent formation of 5-methyl-uridine at position 54 (M-5-U54) in all tRNAs. This Deinococcus geothermalis (strain DSM 11300 / CIP 105573 / AG-3a) protein is Methylenetetrahydrofolate--tRNA-(uracil-5-)-methyltransferase TrmFO.